The sequence spans 177 residues: Acireductone dioxygenase (177 aa).

His-99, His-101, Glu-105, and His-143 together coordinate Fe(2+). Residues His-99, His-101, Glu-105, and His-143 each coordinate Ni(2+).

It belongs to the acireductone dioxygenase (ARD) family. As to quaternary structure, monomer. It depends on Fe(2+) as a cofactor. Ni(2+) serves as cofactor.

The enzyme catalyses 1,2-dihydroxy-5-(methylsulfanyl)pent-1-en-3-one + O2 = 3-(methylsulfanyl)propanoate + CO + formate + 2 H(+). It carries out the reaction 1,2-dihydroxy-5-(methylsulfanyl)pent-1-en-3-one + O2 = 4-methylsulfanyl-2-oxobutanoate + formate + 2 H(+). The protein operates within amino-acid biosynthesis; L-methionine biosynthesis via salvage pathway; L-methionine from S-methyl-5-thio-alpha-D-ribose 1-phosphate: step 5/6. Catalyzes 2 different reactions between oxygen and the acireductone 1,2-dihydroxy-3-keto-5-methylthiopentene (DHK-MTPene) depending upon the metal bound in the active site. Fe-containing acireductone dioxygenase (Fe-ARD) produces formate and 2-keto-4-methylthiobutyrate (KMTB), the alpha-ketoacid precursor of methionine in the methionine recycle pathway. Ni-containing acireductone dioxygenase (Ni-ARD) produces methylthiopropionate, carbon monoxide and formate, and does not lie on the methionine recycle pathway. This chain is Acireductone dioxygenase, found in Leptospira interrogans serogroup Icterohaemorrhagiae serovar copenhageni (strain Fiocruz L1-130).